A 929-amino-acid polypeptide reads, in one-letter code: MWQKPSLTKSMMNEVSSNSPKSPTLTSSPSTQSFANRVLPGRNLDGGGGGSNRLIFGGSGGGSGGGSLPSSPVSSPVNPFNLNGGGGGKSSRRRGVTVAAGSEQVETRRKILLGNSRPFRRRARSMEILNSWDFIPYQKKPSDDEQGQVDQYIQGENDEDLTSYESYITNNNTTTTTNTNNSNNNNSNNDGSGSGSGAGGSFIGTTTSAKTTSTTSTSAATTTTTTTTSSSSSSPSSSSPSSTSPTIASNNDNNNKIEPPQPSKIANSVPPLTLSQSQTQQQQQQKVKPPPPSPRFSTNSSGSQSPPVPPRSSKSLGLSNDFSISLSSSMSSNSLLISGSINTLPTSSSSSSSVGGSGASAASASISSSSSLSSSSLSVSKLIYENNEENKFVVVSGPKDQLVEYLCNKNKLDFSFVNSFILSFRYFIEPEELFNHLMVKYETKVQTTSSIKVSKQFEEIQDRIRQNILIIISVWVDCNYSDFEDNLSLHKRLFKLVQDTPHAVFLRDSIDRQKVSKIPILDLYEKLKDELLLSLSPRGSLSGSGGISNNNNGSDLKNSNNGNNSSNNNNSSSNSSSSSSSSDIKNIKNSFFSLTTMMDWLMNHLSIGYATADSILKKLFKLKVIGSLGSGGGFTNISSSHTNSNSKSSKEELYFFTSTKSIINKEIYSRSFMDYSPQDIAKQLTLIEFKLFQSVKMKELYHKSWTISKSKFENSPNIMSLITMSNKIANWVATEVVTTPHPKKRVEVLKRFISVAEHCKKINNFNTLMEVISGLSNSAVSRLKETWKSLPTRYVNSFNSLQNFLKTDENWKSYRQTLKTKETPCLPYLGLFLQDINFIEDGNSNLSSENDWVNFKKMNLLTSVFTEIQYFQRHPYFSFSTHQNIQTYFEKDIVILPEKELYAFSKFIESPSNPLFRLSKSKNQSIFNI.

A compositionally biased stretch (polar residues) spans 1–15; sequence MWQKPSLTKSMMNEV. Disordered stretches follow at residues 1 to 102 and 169 to 316; these read MWQK…AAGS and TNNN…SKSL. Residues 16 to 33 show a composition bias toward low complexity; the sequence is SSNSPKSPTLTSSPSTQS. A compositionally biased stretch (gly residues) spans 44-67; sequence LDGGGGGSNRLIFGGSGGGSGGGS. 2 stretches are compositionally biased toward low complexity: residues 68 to 80 and 169 to 191; these read LPSS…VNPF and TNNN…NNDG. Positions 192–202 are enriched in gly residues; it reads SGSGSGAGGSF. The segment covering 203 to 246 has biased composition (low complexity); it reads IGTTTSAKTTSTTSTSAATTTTTTTTSSSSSSPSSSSPSSTSPT. Polar residues predominate over residues 247-256; it reads IASNNDNNNK. Positions 270-287 are enriched in low complexity; it reads PPLTLSQSQTQQQQQQKV. The span at 295–305 shows a compositional bias: polar residues; sequence RFSTNSSGSQS. Residues 390–528 enclose the N-terminal Ras-GEF domain; it reads NKFVVVSGPK…PILDLYEKLK (139 aa). Residues 540-583 form a disordered region; it reads SLSGSGGISNNNNGSDLKNSNNGNNSSNNNNSSSNSSSSSSSSD. The Ras-GEF domain occupies 676-911; that stretch reads SPQDIAKQLT…YAFSKFIESP (236 aa).

Promotes the exchange of Ras-bound GDP by GTP. The chain is Ras guanine nucleotide exchange factor M (gefM) from Dictyostelium discoideum (Social amoeba).